We begin with the raw amino-acid sequence, 398 residues long: Cytochrome b (398 aa).

A run of 4 helical transmembrane segments spans residues 33–53, 77–98, 113–133, and 178–198; these read FGSLLGLCLVAQIITGLFLAM, WLIRNLHANGASFFFICVYLHI, WNIGVILLLLVMMTAFVGYVL, and FFAFHFLFPFLIAAFTIIHLL. Heme b-binding residues include H83 and H97. Positions 182 and 196 each coordinate heme b. A ubiquinone is bound at residue H201. 4 consecutive transmembrane segments (helical) span residues 226 to 246, 288 to 308, 320 to 340, and 347 to 367; these read YKDLLGFAILLIALISLSLFA, LGGVLALLASILILMLVPILH, FTQLLFWLLVADVIILTWIGG, and YVVIGQIASFLYFFLFLFLIP.

Belongs to the cytochrome b family. The cytochrome bc1 complex contains 3 respiratory subunits (MT-CYB, CYC1 and UQCRFS1), 2 core proteins (UQCRC1 and UQCRC2) and probably 6 low-molecular weight proteins. Requires heme b as cofactor.

The protein resides in the mitochondrion inner membrane. Its function is as follows. Component of the ubiquinol-cytochrome c reductase complex (complex III or cytochrome b-c1 complex) that is part of the mitochondrial respiratory chain. The b-c1 complex mediates electron transfer from ubiquinol to cytochrome c. Contributes to the generation of a proton gradient across the mitochondrial membrane that is then used for ATP synthesis. The chain is Cytochrome b (mt-cyb) from Channa asiatica (Small snakehead).